Consider the following 407-residue polypeptide: Sensor histidine kinase YdfH (407 aa).

At Met-1 to Arg-25 the chain is on the cytoplasmic side. The next 2 helical transmembrane spans lie at Val-26–Ser-46 and Gly-47–Leu-67. The Cytoplasmic portion of the chain corresponds to His-68–Arg-78. 2 helical membrane-spanning segments follow: residues Val-79–Gly-99 and Phe-100–Ala-120. Topologically, residues Asp-121–Thr-125 are cytoplasmic. The helical transmembrane segment at Phe-126–Gly-146 threads the bilayer. Residues Glu-147–His-150 are Extracellular-facing. The helical transmembrane segment at Phe-151–Ala-171 threads the bilayer. Residues Gln-172–Glu-407 lie on the Cytoplasmic side of the membrane. Residues Glu-201 to Gly-402 enclose the Histidine kinase domain. At His-210 the chain carries Phosphohistidine; by autocatalysis.

Its subcellular location is the cell membrane. It carries out the reaction ATP + protein L-histidine = ADP + protein N-phospho-L-histidine.. Its function is as follows. Member of the two-component regulatory system YdfH/YdfI. May activate YdfI by phosphorylation. This chain is Sensor histidine kinase YdfH (ydfH), found in Bacillus subtilis (strain 168).